A 139-amino-acid chain; its full sequence is NADH-quinone oxidoreductase subunit A (139 aa).

The next 3 membrane-spanning stretches (helical) occupy residues 11 to 31 (LWPL…MLAL), 70 to 90 (LIAI…AWAI), and 97 to 117 (WPGY…LVYL).

It belongs to the complex I subunit 3 family. In terms of assembly, NDH-1 is composed of 14 different subunits. Subunits NuoA, H, J, K, L, M, N constitute the membrane sector of the complex.

Its subcellular location is the cell inner membrane. The enzyme catalyses a quinone + NADH + 5 H(+)(in) = a quinol + NAD(+) + 4 H(+)(out). NDH-1 shuttles electrons from NADH, via FMN and iron-sulfur (Fe-S) centers, to quinones in the respiratory chain. The immediate electron acceptor for the enzyme in this species is believed to be ubiquinone. Couples the redox reaction to proton translocation (for every two electrons transferred, four hydrogen ions are translocated across the cytoplasmic membrane), and thus conserves the redox energy in a proton gradient. In Methylococcus capsulatus (strain ATCC 33009 / NCIMB 11132 / Bath), this protein is NADH-quinone oxidoreductase subunit A.